The chain runs to 600 residues: MPEIRVTPLGAGQDVGRSCILVSISGKNVMLDCGMHMGYNDDRRFPDFSYITQSGRLTDFLDCVIISHFHLDHCGALPYFSEMVGYDGPIYMTHPTQAICPILLEDYRKIAVDKKGEANFFTSQMIKDCMKKVVAVHLHQTVQVDDELEIKAYYAGHVLGAAMFQIKVGSESVVYTGDYNMTPDRHLGAAWIDKCRPNLLITESTYATTIRDSKRCRERDFLKKVHETVERGGKVLIPVFALGRAQELCILLETFWERMNLKVPIYFSTGLTEKANHYYKLFITWTNQKIRKTFVQRNMFEFKHIKAFDRTFADNPGPMVVFATPGMLHAGQSLQIFRKWAGNEKNMVIMPGYCVQGTVGHKILSGQRKLEMEGRQMLEVKMQVEYMSFSAHADAKGIMQLVGQAEPESVLLVHGEAKKMEFLRQKIEQEFRVSCYMPANGETVTLPTSPSIPVGISLGLLKREMVQGLLPEAKKPRLLHGTLIMKDSNFRLVSSEQALKELGLAEHQLRFTCRVHLQDTRKEQETALRVYSHLKSTLKDHCVQHLPDGSVTVESILIQAAAHSEDPGTKVLLVSWTYQDEELGSFLTTLLKNGLPQAPS.

Zn(2+) is bound by residues His-68, His-70, Asp-72, His-73, His-157, and Asp-178. The HXHXDH motif motif lies at 68 to 73; it reads HFHLDH. The active site involves Glu-203. Lys-381 is covalently cross-linked (Glycyl lysine isopeptide (Lys-Gly) (interchain with G-Cter in SUMO)). Residue His-414 participates in Zn(2+) binding. Glycyl lysine isopeptide (Lys-Gly) (interchain with G-Cter in SUMO) cross-links involve residues Lys-462 and Lys-475. Positions 469–479 match the Nuclear localization signal motif; sequence LLPEAKKPRLL.

The protein belongs to the metallo-beta-lactamase superfamily. RNA-metabolizing metallo-beta-lactamase-like family. INTS11 subfamily. Component of the Integrator complex, composed of core subunits INTS1, INTS2, INTS3, INTS4, INTS5, INTS6, INTS7, INTS8, INTS9/RC74, INTS10, INTS11/CPSF3L, INTS12, INTS13, INTS14 and INTS15. The core complex associates with protein phosphatase 2A subunits PPP2CA and PPP2R1A, to form the Integrator-PP2A (INTAC) complex. INTS11 is part of the RNA endonuclease subcomplex, composed of INTS4, INTS9, INTS11 and inositol hexakisphosphate (InsP6). Interacts with WDR73; interaction is required for the assembly of the RNA endonuclease subcomplex in the cytoplasm. Interacts with BRAT1; interaction is required for the assembly of the RNA endonuclease subcomplex and inhibits the endonuclease activity of INTS11 before formation of mature integrator complex. It depends on Zn(2+) as a cofactor. In terms of processing, sumoylated; sumoylation regulates its subcellular location and is required for integrator complex integrity.

The protein resides in the nucleus. Its subcellular location is the cytoplasm. Its activity is regulated as follows. The RNA endonuclease activity is inhibited by BRAT1 that forms hyrogen bond and hydrophobic interactions with the active site. Its function is as follows. RNA endonuclease component of the integrator complex, a multiprotein complex that terminates RNA polymerase II (Pol II) transcription in the promoter-proximal region of genes. The integrator complex provides a quality checkpoint during transcription elongation by driving premature transcription termination of transcripts that are unfavorably configured for transcriptional elongation: the complex terminates transcription by (1) catalyzing dephosphorylation of the C-terminal domain (CTD) of Pol II subunit POLR2A/RPB1 and SUPT5H/SPT5, (2) degrading the exiting nascent RNA transcript via endonuclease activity and (3) promoting the release of Pol II from bound DNA. The integrator complex is also involved in terminating the synthesis of non-coding Pol II transcripts, such as enhancer RNAs (eRNAs), small nuclear RNAs (snRNAs), telomerase RNAs and long non-coding RNAs (lncRNAs). Within the integrator complex, INTS11 constitutes the RNA endonuclease subunit that degrades exiting nascent RNA transcripts. Mediates recruitment of cytoplasmic dynein to the nuclear envelope, probably as component of the integrator complex. The sequence is that of Integrator complex subunit 11 from Mus musculus (Mouse).